The primary structure comprises 412 residues: DNA polymerase IV 2 (412 aa).

The region spanning 7–192 (IFLVDMQSFY…LPVGSMFGVG (186 aa)) is the UmuC domain. Mg(2+) is bound by residues Asp11 and Asp107. Glu108 is a catalytic residue.

The protein belongs to the DNA polymerase type-Y family. As to quaternary structure, monomer. Mg(2+) is required as a cofactor.

The protein localises to the cytoplasm. It carries out the reaction DNA(n) + a 2'-deoxyribonucleoside 5'-triphosphate = DNA(n+1) + diphosphate. Functionally, poorly processive, error-prone DNA polymerase involved in untargeted mutagenesis. Copies undamaged DNA at stalled replication forks, which arise in vivo from mismatched or misaligned primer ends. These misaligned primers can be extended by PolIV. Exhibits no 3'-5' exonuclease (proofreading) activity. May be involved in translesion synthesis (TSL), in conjunction with the beta clamp from PolIII. This Bacillus subtilis (strain 168) protein is DNA polymerase IV 2 (dinB2).